A 1732-amino-acid polypeptide reads, in one-letter code: Polycystin-1-like protein 3 (1732 aa).

Positions 1 to 23 (MFFKGGSWLWLYIRTSIILGSEL) are cleaved as a signal peptide. The Extracellular portion of the chain corresponds to 24–697 (NSPAPHGQNN…IKLFLRVTNN (674 aa)). Residues 30–138 (GQNNCYQLNR…CLLKYYFICQ (109 aa)) form the C-type lectin domain. 2 disulfide bridges follow: C51–C137 and C112–C129. N-linked (GlcNAc...) asparagine glycans are attached at residues N286, N363, N515, N537, and N575. Residues 523-685 (TSLNMSTHQL…FVVPRTVNVE (163 aa)) enclose the GAIN-B domain. Disulfide bonds link C635–C663 and C650–C665. The tract at residues 635–685 (CYYWEIHNQTWSSAGCQVGPQSTILRTQCLCNHLTFFASDFFVVPRTVNVE) is GPS. A helical transmembrane segment spans residues 698–718 (PVGVSLLASLLGFYVITVVWA). At 719–905 (RKKDQADMQK…PWNQFTRVQR (187 aa)) the chain is on the cytoplasmic side. The PLAT domain occupies 743 to 860 (FHYLIQVYTG…GDCELDRVFI (118 aa)). A helical transmembrane segment spans residues 906–926 (LSCCMTLLLCNMVINVMFWKI). At 927–939 (NSTTAKRDEQMRP) the chain is on the extracellular side. A helical membrane pass occupies residues 940–960 (FAVAWSELLVSIHTAVILFPI). The Cytoplasmic segment spans residues 961–1154 (NLVIGRLFPL…ISNGLSKWLT (194 aa)). A helical transmembrane segment spans residues 1155–1175 (SVCWLLLGFTSLASAFFTALY). The Extracellular segment spans residues 1176-1198 (SLELSKDQATSWMISIILSVLQN). Residues 1199–1219 (IFISQPVKVVFFTFLYSLMMS) form a helical membrane-spanning segment. At 1220–1289 (RMPRLNKENE…KLTGDILVQI (70 aa)) the chain is on the cytoplasmic side. A helical transmembrane segment spans residues 1290-1300 (LFLTLLMTAIY). Residues 1301-1461 (SAKNSNRFYL…SFTSLQMSKK (161 aa)) are Extracellular-facing. Residues 1462–1491 (GCVWSIISQVIYYLLVCYYAFIQGCQLKQQ) traverse the membrane as a helical segment. Topologically, residues 1492–1500 (KWRFFTGKR) are cytoplasmic. The helical transmembrane segment at 1501–1519 (NILDTSIILISFILLGLDM) threads the bilayer. The Extracellular portion of the chain corresponds to 1520–1550 (KSISLHKKNMARYRDDQDRFISFYEAVKVNS). The helical transmembrane segment at 1551–1572 (AATHLVGFPVLLATVQLWNLLR) threads the bilayer. Residues 1573–1589 (HSPRLRVISRTLSRAWD) lie on the Cytoplasmic side of the membrane. A helical membrane pass occupies residues 1590–1614 (EVVGFLLIILILLTGYAIAFNLLFG). The tract at residues 1613-1651 (FGCSISDYRTFFSSAVTVVGLLMGISHQEEVFALDPVLG) is channel pore-region. Residues 1615 to 1647 (CSISDYRTFFSSAVTVVGLLMGISHQEEVFALD) lie on the Extracellular side of the membrane. The helical transmembrane segment at 1648 to 1667 (PVLGTFLILTSVILMVLVVI) threads the bilayer. Residues 1668 to 1732 (NLFVSAILMA…SDTEVLDELP (65 aa)) are Cytoplasmic-facing.

Belongs to the polycystin family. As to quaternary structure, heterotetramer with PKD2L1, composed of 3 subunit of PKD2L1 and 1 subunit of PKD1L3. Post-translationally, autoproteolytically processed at the GPS region of the GAIN-B domain; this cleavage modulates receptor activity. Highly expressed in placenta, weakly in heart and lung.

Its subcellular location is the cell membrane. The catalysed reaction is Ca(2+)(in) = Ca(2+)(out). The enzyme catalyses Na(+)(in) = Na(+)(out). It carries out the reaction K(+)(in) = K(+)(out). It catalyses the reaction Mg(2+)(in) = Mg(2+)(out). With respect to regulation, the non-selective cation channel is gated following an off-response property by acid: gated open after the removal of acid stimulus, but not during acid application. Regulation of non-selective cation channel activity by external Ca(2+) is bimodal, first sensitizing and subsequently inactivating the current. Functionally, pore-forming subunit of a heterotetrameric, non-selective cation channel that is permeable to Ca(2+). Also shows permeability towards NA(1+), K(+) and Mg(2+). Heterotetrameric complex channel is activated by external low pH and Ca(2+), but opens only when the extracellular pH rises again and after the removal of acid stimulus. May act as a sour taste receptor in gustatory cells; however, its contribution to sour taste perception is unclear in vivo and may be indirect. In Homo sapiens (Human), this protein is Polycystin-1-like protein 3.